We begin with the raw amino-acid sequence, 831 residues long: AMP deaminase (831 aa).

Disordered regions lie at residues 26–45, 66–110, and 130–149; these read NPGA…QDTP, NGTQ…KLLN, and NAVV…METT. Phosphoserine is present on residues Ser79 and Ser84. Residues His319 and His321 each coordinate Zn(2+). Residues His321 and 390 to 395 contribute to the substrate site; that span reads KFNLKY. His587 provides a ligand contact to Zn(2+). Glu590 contributes to the substrate binding site. His609 functions as the Proton acceptor in the catalytic mechanism. Asp664 provides a ligand contact to Zn(2+). 665 to 668 contacts substrate; it reads DPLQ. Phosphoserine occurs at positions 758, 776, 780, and 782.

Belongs to the metallo-dependent hydrolases superfamily. Adenosine and AMP deaminases family. Homotetramer. Zn(2+) serves as cofactor.

It localises to the cytoplasm. It catalyses the reaction AMP + H2O + H(+) = IMP + NH4(+). The protein operates within purine metabolism; IMP biosynthesis via salvage pathway; IMP from AMP: step 1/1. Functionally, AMP deaminase plays a critical role in energy metabolism. The protein is AMP deaminase (ada1) of Schizosaccharomyces pombe (strain 972 / ATCC 24843) (Fission yeast).